Here is a 96-residue protein sequence, read N- to C-terminus: Small ribosomal subunit protein bS6 (96 aa).

It belongs to the bacterial ribosomal protein bS6 family.

Binds together with bS18 to 16S ribosomal RNA. This Streptococcus pneumoniae serotype 2 (strain D39 / NCTC 7466) protein is Small ribosomal subunit protein bS6.